A 322-amino-acid chain; its full sequence is 26S proteasome non-ATPase regulatory subunit 7 (322 aa).

The 136-residue stretch at 9-144 (VVVHPLVLLS…TEAYISVEEV (136 aa)) folds into the MPN domain. Residue Lys-180 forms a Glycyl lysine isopeptide (Lys-Gly) (interchain with G-Cter in ubiquitin) linkage. N6-acetyllysine is present on residues Lys-204, Lys-214, Lys-314, and Lys-315. The segment at 281–322 (ANRDAEKKEGQEKEDSKKDRKDDKEKEKEKSDVKKEEKKEKK) is disordered.

Belongs to the peptidase M67A family. As to quaternary structure, component of the 19S proteasome regulatory particle complex. The 26S proteasome consists of a 20S core particle (CP) and two 19S regulatory subunits (RP). The regulatory particle is made of a lid composed of 9 subunits including PSMD7, a base containing 6 ATPases and few additional components. Within the complex, PSMD7 interacts with subunit PSMD4 through their respective MPN domain. Interacts with TRIM5.

Functionally, component of the 26S proteasome, a multiprotein complex involved in the ATP-dependent degradation of ubiquitinated proteins. This complex plays a key role in the maintenance of protein homeostasis by removing misfolded or damaged proteins, which could impair cellular functions, and by removing proteins whose functions are no longer required. Therefore, the proteasome participates in numerous cellular processes, including cell cycle progression, apoptosis, or DNA damage repair. This Bos taurus (Bovine) protein is 26S proteasome non-ATPase regulatory subunit 7 (PSMD7).